Reading from the N-terminus, the 429-residue chain is Ribosomal RNA small subunit methyltransferase B (429 aa).

Residues 254 to 260, Asp-277, Asp-303, and Asp-322 each bind S-adenosyl-L-methionine; that span reads CAGPGGK. Cys-375 acts as the Nucleophile in catalysis.

This sequence belongs to the class I-like SAM-binding methyltransferase superfamily. RsmB/NOP family.

It localises to the cytoplasm. The catalysed reaction is cytidine(967) in 16S rRNA + S-adenosyl-L-methionine = 5-methylcytidine(967) in 16S rRNA + S-adenosyl-L-homocysteine + H(+). Its function is as follows. Specifically methylates the cytosine at position 967 (m5C967) of 16S rRNA. This chain is Ribosomal RNA small subunit methyltransferase B, found in Escherichia coli O6:K15:H31 (strain 536 / UPEC).